Reading from the N-terminus, the 618-residue chain is UvrABC system protein C (618 aa).

Residues 13 to 92 (DKPGVYLMKN…IKKYRPKYNI (80 aa)) form the GIY-YIG domain. One can recognise a UVR domain in the interval 204 to 239 (LDIVENFKLNMEKAAENLEFEKAAMLRDKINIIEKI).

The protein belongs to the UvrC family. In terms of assembly, interacts with UvrB in an incision complex.

The protein localises to the cytoplasm. The UvrABC repair system catalyzes the recognition and processing of DNA lesions. UvrC both incises the 5' and 3' sides of the lesion. The N-terminal half is responsible for the 3' incision and the C-terminal half is responsible for the 5' incision. The protein is UvrABC system protein C of Clostridium botulinum (strain Loch Maree / Type A3).